Consider the following 150-residue polypeptide: MKVTRHAKILEIINSNNIETQEELAEKLKNSGMNVTQATVSRDIKELKLIKVLSDNGRYKYATISRTESFLSNKLVNIFSQTVVSVENIDNFVVIKTISGSASAAAEAIDSLGFIGIAGTIAGDNTIFVMARDREKAHGITQKMKKMISQ.

The protein belongs to the ArgR family.

The protein resides in the cytoplasm. It participates in amino-acid biosynthesis; L-arginine biosynthesis [regulation]. Functionally, regulates arginine biosynthesis genes. The chain is Arginine repressor from Clostridium kluyveri (strain NBRC 12016).